The chain runs to 252 residues: Lipoprotein PrgK (252 aa).

The first 17 residues, 1-17 (MIRRYLYTFLLVMTLAG), serve as a signal peptide directing secretion. Cysteine 18 carries N-palmitoyl cysteine lipidation. A lipid anchor (S-diacylglycerol cysteine) is attached at cysteine 18. The helical transmembrane segment at 207–227 (FATSWIVLIILLSVMSAGFGV) threads the bilayer.

This sequence belongs to the YscJ lipoprotein family.

Its subcellular location is the cell outer membrane. Its function is as follows. Required for invasion of epithelial cells. Could be involved in protein secretion. This is Lipoprotein PrgK (prgK) from Salmonella typhimurium (strain LT2 / SGSC1412 / ATCC 700720).